A 633-amino-acid chain; its full sequence is MPAIRLPDGSVRQFENPVSVHDVAASIGAGLARAALAGRVDGALVDTSFVIDHDVDLAIVTDKDADGLGILRHSTAHLLACAVKELFPEAQVTIGPEIENGFYYDFSYKRPFTPEDLVAIEKKMAELAKKDIPVERYELPRDEAIAYFKSIGEAYKAEIIESIPQGEVLSLYREGNFTDLCRGPHVPSTGKLKVFKLMKVAGAYWRGDSKNEMLQRIYGTAWAKKEDLEAYLHMLEEAEKRDHRKLGRQLDLFHIQDEAPGMVFWHPKGWTLWQQVEQYMRRVLIANDYQEVRTPQIVDRSLWEKSGHWAMYQDLMFTTESEKRDYAVKPMNCPCHIQIFNQGLKSYRDLPLRMAEFGSCHRNEPSGSLHGIMRVRNFVQDDAHIFCTEAQMQPETAAFIDLLQAVYQDFGFDNILIKLSTRPEKRVGADELWDQAEAALAAALAAKGLAYELQPGEGAFYGPKIEFSLKDCLGRVWQCGTLQLDFNLPVRLGAEYVSEDNAKKHPVMLHRAILGSLERFIGILIEHHAGAMPLWLAPVQMAVLNITEAQAEYATEVAETLKKQGFRVDLDLRNEKISYKIREHSLQKLPYQIIVGDKEKAGALVAVRARTGEDLGQIPLSQFIERLKSELLH.

Residues 1 to 61 (MPAIRLPDGS…DHDVDLAIVT (61 aa)) enclose the TGS domain. The tract at residues 242 to 533 (DHRKLGRQLD…LIEHHAGAMP (292 aa)) is catalytic. Positions 333, 384, and 510 each coordinate Zn(2+).

It belongs to the class-II aminoacyl-tRNA synthetase family. Homodimer. It depends on Zn(2+) as a cofactor.

It is found in the cytoplasm. It catalyses the reaction tRNA(Thr) + L-threonine + ATP = L-threonyl-tRNA(Thr) + AMP + diphosphate + H(+). Functionally, catalyzes the attachment of threonine to tRNA(Thr) in a two-step reaction: L-threonine is first activated by ATP to form Thr-AMP and then transferred to the acceptor end of tRNA(Thr). Also edits incorrectly charged L-seryl-tRNA(Thr). This Laribacter hongkongensis (strain HLHK9) protein is Threonine--tRNA ligase.